A 242-amino-acid polypeptide reads, in one-letter code: RxLR effector protein PexRD15 (242 aa).

The first 24 residues, 1–24 (MMKSLYAVNLVLLLLLAFFAPAPA), serve as a signal peptide directing secretion. The RxLR-dEER motif lies at 48 to 66 (RLLRAHSSDKEEQKEEEER).

It belongs to the RxLR effector family.

It is found in the secreted. Its subcellular location is the host cell membrane. Functionally, effector that enhances P.infestans colonization of Nicotiana benthamiana leaves. This Phytophthora infestans (strain T30-4) (Potato late blight agent) protein is RxLR effector protein PexRD15.